Consider the following 3112-residue polypeptide: MSSKKMMWVPKSAHKAPVVSREPVIRKKEWVARQIPKYIPVSNPSDCRDEISQTLLHFDSEEAVYDFVWRFPMGSIFWDTNGRIKPVVNCLLRATRMNLDYDVAADVYVCRDCLSCASSYMYFSNYHYDCRELRENHEAVVSCKYEQHIVSTFDVFPRYCTQEIEQNVVNWMTETLERYDNEPLRIEKQLQFYNHKTEQMESRVQEVQVTTAEYAVSDTYVPQQLSRKGSVSAKLTQRRANKIIMRTHEVENLIRETIDLCDERQIPITFVDVKHKRCLPRIPLRHMQAKPDISEIVEQGDMYNEVGQFIEQYQNLAEPFRVIRDYEVTRGWSGVILHRDDLALDPQTQARCLNNLFVVMGRCEHGHLQNALRPDCLEGLTYYSDTFGKVFNESLVKHHPGKHQFRIGSRTDYEWEELAMWVNAVCPVSFRCADCRPPQSLNEYIENIRMSKAMAELAGRQDALSKTLHKWTTMLISSVLTTEIRARDNLEPIQERIFTRNMPLGPLYDVAGAMNRAVIDIQTAVQNMQLSIGNSNMNEQQRNQTLLNEINKIKQHSFMQTKEMLSRFENIAQTYQNIISSASQPLSIHSMRQLMMDSRMDESFEFDIMRKKGSIASIAPMAFRTFEDIYSQPGVYNQKWLNLTPSGRFQTDIDYLRLDLPIDVIQKKKHVVNRNEIKEETCYVIVGQVNVSFCEVVARCFVPIPHVLRVGSPQNPTMIKIQDQEGGKTLVPKSGFCYVLQLVLMLGYVPDQLTAAFVKDVGIVVESLGPWPLFVDYLGAIKNLIIRYPTTIKAPTALHIVDHVDTVIHVMTTLGCVNKGEHYLTLQSVAQLHDAAMTVNIETFKDYRIGGVVPQLKHMLQSEEHMLEVLEAKPQWLVHLLLSPTQIWALSQSVVKYQVIHKVMTSNPDLAVALAQLVAISSNFSIFKNTEHVIQKYFEVSKQLQNVSGVILGEHNEYFETAFAQYSALRFSTDVVLLMDQFSTRKKTLDDLEDYYRKTIPSILIECGLLGPSDFGWRKRLVRGVVDRGSGLKSTVKSLGSFSTKEKWISWSGLGSGTITCVKFPFVCLQRSGSWLYSSTKTTAFNAVWMAGIKCVKSNVRSILLDSALYGAITLALLCAIKLIRKAFRFVEGLIKEDTSDDEDYVLHAKAASDSLYIQCLAWLALVVGCFNSGLANDIYFSTTKYRTLLDMVKTAHSDSFVFHAGDEEEGEIVELITRDNFVDYVYNHSDPLMEFDSETLLGWYTRISYQGRVLEHPLRVGTNCHLTRENVDEIAKNIATGAGNEFIVVGDVGSGKSTKLPIAVSTYGPVLILVPSRELVNNLCSSIWHVGKKQASTYMMNCITRGTSNISIMTYGYALALFSHCPIELQKYRFIQMDECHEFSSHMITFYSWWRESGKFTKLFKTTATPPGTVIKGGCVPTNHKVDVIEIRDVSVEEFCRRSIDSHAEGLRSLMPNGGRVIMFVPSRRECELARSSLISIPGARTWVVYRAAATQATKLVAELADDKHYFQIIITTTVLQNGVNLDPDCVVDFGQTFEAAYDRDSRQLGVRRRNINPGELIQRVGRVGRNKPGKFIQVGKRLEHEVVPNSCCVTDAILMSFTLELAPFISSHLIDEVNFVTREQVRTAMKFSAPLLFMIHYVRRDGRMLNGYYQQLKGLLLQTSDVALCDTLVGDAETNSFLTLRQYQLRGIIEAQEVLPDLPIPFYSSEFALPFYLEIGQITKEAIRARSFTLRIKTPDVKKAVMRLSTSATQIDQTIGILRTRLQLTRERLSKFSELKATAHNLRLTPIFNTCFDMGAAKSESTLRASLTAGEELLSALELARTEKSDKALEKLILDNPVLGDCLVFHGGPEEYFDQTLFQTSTGLINKYTVGIACLTVGLGCTIWYYLKKREKYVMHGKVHTRETGLTTNHLFVPGMKEHIQEWTGGDHEIGNRFGEAYKRRFIGRQPTEEQKLSKEKWDKREGQQTSVYKTLYDLDPTKFKYVVVECPDFDLKKKLNRQEKKQLDTTIVEACRTRMLDKGQHDFKDVERATVYLFNDNGVGHKVQLTPHNPLAVSRTTTHPVGFPAEAGRLRQTGQAMEMTPEELEKALDDNYVPHSRCQIDISHLHRHLAIVNTGGMSTQCFITQTMCVAPYHLAMGFKDNTKLTIYCSNGVYVMPVPKVEKMENMDLVVFRMPQDFPPLKRCATIREPKSSDEVTLITGKRTTHGIQLQFSKVVSIDRKSDTVWKYMIDSVPGVCGGMVMCVEDGCVVGFHSAAAIRNKVSNGSIFTPVTPQLLDSLQSSEGHLFDWYFNDDLISWKGVPTNMDPRNFPVSETISEFIFHNDSKGHGTDKYYGENLTIEGRVLQSFNTRHVVKGLDDAFAEYVNKFGEPPADTFTHLPSDLSSDAFYKDFMKYSTPVEVGTVNIENFEKAVQAVVELLEQQGFEQGEFSPEMDFYKILNSFNLDTAMGALYQCKKKDVLPMASHEQLATWFWNSLENLATGKLGLWKASLKAELRPKEKVLEKKTRVFTAAPFDVSFGAKAFVDDFNNKFYATQAGSNWTVGINKFNCGWDELARRFNPDWKFIDADGSRYDSSLTPLLFNAVLRIRQHFLRANGFERRMLSNFYTQLVWTPISTITGQIVKKNKGGPSGQPSTVVDNTMMLMIAVEYAKLQYGVTDLKYVCNGDDLILNAPQGVCETIRANFSHSFKELGLTYEFEQEVDSIDQVEYMSHKWIDCGGVLIPKLKPERIVSVLQWNKSLDLASQANKINAAWIESFGYGDLSKFIREYANWWGERNGQVGFLCSEEKVASLYLTNDVTIHTEEHDEFVFHSGADQSGVVKDQTGDKAEGSGTKTEDPPNQTTDPVNNPSNGGNKDAPQNLNATVVTKSYTYIPPIMKSLVTIDTAKKMADYTPPDALISTQACTLEQFGRWANAAANGLGLSMQAFQTDVVPYWIYWCIVNSASDEHKKLSSWTKVNMTIDDATGQINLNEGEAQTIYEMSPMFDEAKPTLRAVMRHFGALAYRWVKFSIAKRKPIIPHNAIKAGLMDVTYFPCCIDFVTVDQLSPQEQNVRNQVINARVSDTPRALFKHAQRAGAGEEDTNLRRDDDANYGRTRVGGAMFGTR.

One can recognise a Peptidase S30 domain in the interval K234 to Y383. Residues H286, D301, and S333 each act as for P1 proteinase activity in the active site. The Peptidase C6 domain maps to T729–G850. Active-site for helper component proteinase activity residues include C737 and H809. The Helicase ATP-binding domain maps to N1278–V1429. Residue G1291 to S1298 coordinates ATP. The DECH box signature appears at D1379–H1382. Positions S1444–V1627 constitute a Helicase C-terminal domain. The region spanning D2096–M2311 is the Peptidase C4 domain. Residues H2140, D2174, and C2243 each act as for nuclear inclusion protein A activity in the active site. Residues W2569–I2687 enclose the RdRp catalytic domain. A disordered region spans residues H2818–N2867. Residues Q2830 to D2844 show a composition bias toward basic and acidic residues. The span at P2845–N2867 shows a compositional bias: polar residues.

Belongs to the potyviridae genome polyprotein family. VPg is uridylylated by the polymerase and is covalently attached to the 5'-end of the genomic RNA. This uridylylated form acts as a nucleotide-peptide primer for the polymerase. Post-translationally, genome polyprotein of potyviruses undergoes post-translational proteolytic processing by the main proteinase NIa-pro resulting in the production of at least ten individual proteins. The P1 proteinase and the HC-pro cleave only their respective C-termini autocatalytically. 6K1 is essential for proper proteolytic separation of P3 from CI.

Its subcellular location is the host cytoplasmic vesicle. The protein localises to the virion. The enzyme catalyses RNA(n) + a ribonucleoside 5'-triphosphate = RNA(n+1) + diphosphate. It catalyses the reaction Hydrolyzes glutaminyl bonds, and activity is further restricted by preferences for the amino acids in P6 - P1' that vary with the species of potyvirus, e.g. Glu-Xaa-Xaa-Tyr-Xaa-Gln-|-(Ser or Gly) for the enzyme from tobacco etch virus. The natural substrate is the viral polyprotein, but other proteins and oligopeptides containing the appropriate consensus sequence are also cleaved.. It carries out the reaction Hydrolyzes a Gly-|-Gly bond at its own C-terminus, commonly in the sequence -Tyr-Xaa-Val-Gly-|-Gly, in the processing of the potyviral polyprotein.. In terms of biological role, required for aphid transmission and also has proteolytic activity. Only cleaves a Gly-Gly dipeptide at its own C-terminus. Interacts with virions and aphid stylets. Acts as a suppressor of RNA-mediated gene silencing, also known as post-transcriptional gene silencing (PTGS), a mechanism of plant viral defense that limits the accumulation of viral RNAs. May have RNA-binding activity. Functionally, has helicase activity. It may be involved in replication. Its function is as follows. Indispensable for virus replication. Mediates the cap-independent, EIF4E-dependent translation of viral genomic RNAs. Binds to the cap-binding site of host EIF4E and thus interferes with the host EIF4E-dependent mRNA export and translation. VPg-RNA directly binds EIF4E and is a template for transcription. Also forms trimeric complexes with EIF4E-EIF4G, which are templates for translation. In terms of biological role, has RNA-binding and proteolytic activities. Functionally, an RNA-dependent RNA polymerase that plays an essential role in the virus replication. Its function is as follows. Involved in aphid transmission, cell-to-cell and systemis movement, encapsidation of the viral RNA and in the regulation of viral RNA amplification. The sequence is that of Genome polyprotein from Triticum aestivum (Wheat).